A 762-amino-acid chain; its full sequence is Coleoptile phototropism protein 1 (762 aa).

Residues 1–12 (MWESESESHGGE) show a composition bias toward basic and acidic residues. The tract at residues 1 to 29 (MWESESESHGGERGLVPVGGGGGSGRHEA) is disordered. In terms of domain architecture, BTB spans 51–128 (SDLLVKVGDV…SYGMAVDLTA (78 aa)). Positions 227 to 238 (PAAIRGGGGSGG) are enriched in gly residues. Disordered regions lie at residues 227–264 (PAAI…RQAV), 460–495 (MAVA…ASAS), 687–718 (QVDG…AWSS), and 731–762 (GADA…NSIS). Residues 268 to 607 (DWWFEDVSVL…VQVLFTEQVK (340 aa)) form the NPH3 domain. Residues 654-691 (AAAKKDINTLKFELESMKAKYLELQHEMDALQKQVDGR) are a coiled coil. The span at 696–709 (PSPAAAKIGKQQQQ) shows a compositional bias: low complexity. Positions 736–747 (AGGGVAPPGGGE) are enriched in gly residues. Basic residues predominate over residues 752-762 (KGPRRWRNSIS).

It belongs to the NPH3 family.

It participates in protein modification; protein ubiquitination. Its function is as follows. May act as a substrate-specific adapter of an E3 ubiquitin-protein ligase complex (CUL3-RBX1-BTB) which mediates the ubiquitination and subsequent proteasomal degradation of target proteins. Plays a role as signal transduction component in coleoptile phototropism and lateral translocation of auxin. The sequence is that of Coleoptile phototropism protein 1 (CPT1) from Oryza sativa subsp. japonica (Rice).